Reading from the N-terminus, the 1147-residue chain is Nitric oxide synthase, inducible (1147 aa).

Positions lysine 22 to asparagine 51 are disordered. Positions aspartate 23 to asparagine 27 match the DINNN-motif; mediates interaction with SPSB1, SPSB2 and SPSB4 motif. Zn(2+)-binding residues include cysteine 107 and cysteine 112. A (6R)-L-erythro-5,6,7,8-tetrahydrobiopterin-binding site is contributed by serine 115. Cysteine 197 is a heme b binding site. L-arginine contacts are provided by glutamine 260, tryptophan 369, tyrosine 370, and glutamate 374. (6R)-L-erythro-5,6,7,8-tetrahydrobiopterin is bound by residues arginine 378, isoleucine 459, tryptophan 460, and phenylalanine 473. Residue tyrosine 488 participates in heme b binding. A calmodulin-binding region spans residues phenylalanine 512 to serine 532. The Flavodoxin-like domain maps to alanine 536–phenylalanine 674. FMN contacts are provided by threonine 542, glutamate 543, threonine 544, lysine 546, and serine 547. Threonine 564 is modified (phosphothreonine). Phosphotyrosine is present on tyrosine 572. 6 residues coordinate FMN: serine 588, threonine 589, serine 625, cysteine 632, glutamate 658, and glutamine 662. The region spanning lysine 727–proline 967 is the FAD-binding FR-type domain. Arginine 747 contributes to the NADP(+) binding site. FAD is bound by residues histidine 769, arginine 903, tyrosine 905, serine 906, threonine 921, and alanine 923. Threonine 926 serves as a coordination point for NADP(+). Positions 927, 940, 941, and 942 each coordinate FAD. The NADP(+) site is built by threonine 981, arginine 1014, serine 1043, arginine 1044, lysine 1050, tyrosine 1052, glutamine 1054, and aspartate 1087.

Belongs to the NOS family. As to quaternary structure, homodimer. Interacts with NHERF1. Interacts with GAPDH; induced by oxidatively-modified low-densitity lipoprotein (LDL(ox)). Interacts with S100A8 and S100A9 to form the iNOS-S100A8/9 transnitrosylase complex. Interacts with SPSB1, SPSB2 and SPSB4. Interacts with ELOC and CUL5 in the presence of SPSB1 or SPSB2 or SPSB4. Forms a complex with ASL, ASS1 and HSP90AA1; the complex regulates cell-autonomous L-arginine synthesis and citrulline recycling while channeling extracellular L-arginine to nitric oxide synthesis pathway. It depends on heme b as a cofactor. Requires FAD as cofactor. The cofactor is FMN. (6R)-L-erythro-5,6,7,8-tetrahydrobiopterin is required as a cofactor. Polyubiquitinated; mediated by SPSB1, SPSB2 and SPSB4, leading to proteasomal degradation. In terms of tissue distribution, in normal kidney, expressed primarily in the medullary thick ascending limb, with minor amounts in the medullary collecting duct and vasa recta bundle.

It is found in the cytoplasm. Its subcellular location is the cytosol. The catalysed reaction is 2 L-arginine + 3 NADPH + 4 O2 + H(+) = 2 L-citrulline + 2 nitric oxide + 3 NADP(+) + 4 H2O. Not stimulated by calcium/calmodulin. Aspirin inhibits expression and function of this enzyme and effects may be exerted at the level of translational/post-translational modification and directly on the catalytic activity. Its function is as follows. Produces nitric oxide (NO) which is a messenger molecule with diverse functions throughout the body. In macrophages, NO mediates tumoricidal and bactericidal actions. Also has nitrosylase activity and mediates cysteine S-nitrosylation of cytoplasmic target proteins such PTGS2/COX2. As component of the iNOS-S100A8/9 transnitrosylase complex involved in the selective inflammatory stimulus-dependent S-nitrosylation of GAPDH implicated in regulation of the GAIT complex activity and probably multiple targets including ANXA5, EZR, MSN and VIM. Involved in inflammation, enhances the synthesis of pro-inflammatory mediators such as IL6 and IL8. The protein is Nitric oxide synthase, inducible (Nos2) of Rattus norvegicus (Rat).